A 311-amino-acid polypeptide reads, in one-letter code: Methionyl-tRNA formyltransferase (311 aa).

(6S)-5,6,7,8-tetrahydrofolate is bound at residue 110–113 (SLLP).

This sequence belongs to the Fmt family.

The catalysed reaction is L-methionyl-tRNA(fMet) + (6R)-10-formyltetrahydrofolate = N-formyl-L-methionyl-tRNA(fMet) + (6S)-5,6,7,8-tetrahydrofolate + H(+). In terms of biological role, attaches a formyl group to the free amino group of methionyl-tRNA(fMet). The formyl group appears to play a dual role in the initiator identity of N-formylmethionyl-tRNA by promoting its recognition by IF2 and preventing the misappropriation of this tRNA by the elongation apparatus. This is Methionyl-tRNA formyltransferase from Streptococcus pyogenes serotype M49 (strain NZ131).